The following is a 209-amino-acid chain: COP9 signalosome complex subunit 8 (209 aa).

In terms of domain architecture, PCI spans Asp8–Phe179. Ser175 carries the phosphoserine modification.

The protein belongs to the CSN8 family. In terms of assembly, component of the CSN complex, composed of COPS1/GPS1, COPS2, COPS3, COPS4, COPS5, COPS6, COPS7 (COPS7A or COPS7B), COPS8 and COPS9. In the complex, it probably interacts directly with COPS3, COPS4 and COPS7 (COPS7A or COPS7B).

The protein localises to the cytoplasm. The protein resides in the nucleus. In terms of biological role, component of the COP9 signalosome complex (CSN), a complex involved in various cellular and developmental processes. The CSN complex is an essential regulator of the ubiquitin (Ubl) conjugation pathway by mediating the deneddylation of the cullin subunits of SCF-type E3 ligase complexes, leading to decrease the Ubl ligase activity of SCF-type complexes such as SCF, CSA or DDB2. The complex is also involved in phosphorylation of p53/TP53, c-jun/JUN, IkappaBalpha/NFKBIA, ITPK1 and IRF8/ICSBP, possibly via its association with CK2 and PKD kinases. CSN-dependent phosphorylation of TP53 and JUN promotes and protects degradation by the Ubl system, respectively. This Rattus norvegicus (Rat) protein is COP9 signalosome complex subunit 8 (Cops8).